The chain runs to 294 residues: MNAVNILIGLMPMIGWGIFPVIVGKIGGKPASQILGTTFGTLILAIVVAIFRGTPIPETKTFIFCLISGACWALAQIITFHVFETMGVSRTMPITTGFQLVGASLWGVFVLGNWSSSQSKLIGFTAIALIIIGVYLTAWSEDKSSASKSGAVKGILLLLVGELGYLGYSAFPQAVSADGFQGFLPQAIGMTIVGIIFGLTQTKKDYKPFKEATSYKNIFSGFFFAFAALTYLISAQPSVNGLATGFVLSQTSVIFATIGGIYILKEKKSKKEMIAVMVGLLLVLVAGSVTAFIK.

10 helical membrane-spanning segments follow: residues 2–24 (NAVN…VIVG), 34–56 (ILGT…GTPI), 63–82 (IFCL…TFHV), 92–114 (MPIT…LGNW), 121–140 (LIGF…TAWS), 150–172 (GAVK…SAFP), 179–198 (GFQG…IIFG), 218–235 (IFSG…LISA), 242–264 (LATG…IYIL), and 274–293 (IAVM…TAFI).

Belongs to the GRP transporter (TC 2.A.7.5) family.

It localises to the cell membrane. Its function is as follows. Could be involved in the uptake of ribose. This Latilactobacillus sakei subsp. sakei (strain 23K) (Lactobacillus sakei subsp. sakei) protein is Putative ribose uptake protein RbsU (rbsU).